A 206-amino-acid chain; its full sequence is Small ribosomal subunit protein uS4 (206 aa).

Positions 27–47 (PSESKCNMNAAPGQHGGRRGR) are disordered. Positions 96-158 (QRLDNVVYRM…SRKQIRIQSA (63 aa)) constitute an S4 RNA-binding domain.

The protein belongs to the universal ribosomal protein uS4 family. As to quaternary structure, part of the 30S ribosomal subunit. Contacts protein S5. The interaction surface between S4 and S5 is involved in control of translational fidelity.

One of the primary rRNA binding proteins, it binds directly to 16S rRNA where it nucleates assembly of the body of the 30S subunit. In terms of biological role, with S5 and S12 plays an important role in translational accuracy. In Dichelobacter nodosus (strain VCS1703A), this protein is Small ribosomal subunit protein uS4.